The following is a 446-amino-acid chain: MAVQLKWPILGVIIPCIIIFSLSYGSHYFILRHHLTMKQQLIYEFYVTMIWISYLLAIYTNPGRVPKNYKPSLASSTRIEQTEDDSDGLGLESREDETLIREEPISGDRCEWIRYCKKCNNYKPPRSHHCKICQQCVLQMDHHCPWTLNCVGNNNLPHFMRFLGWIIWGTGYLMIQLIKLIINYYENSNMPHYLFNKTELVAIIAITPLNFFVFASILVLFIRCLINICKGMTQIEIWEWERLELQWSSKRLWRLIRFNYGRLHKGKPFPELNTWTNTTNNVNYNDNDDDGDEDVELINLATNNNEDSTIVPQNFTIDDLIFPYNLGIWKNLVNALGYPYMWLIPFGKPKSNGYQPQISQDYKQDDQLNLPWPPDGIRQKEIEINVLQQQGYQRDREEEDEEELRSIRNYQELRRRLDPRLNVQRSDFINDMGEGLTDFGVDEDSD.

The Cytoplasmic portion of the chain corresponds to 1–8; it reads MAVQLKWP. The chain crosses the membrane as a helical span at residues 9–29; the sequence is ILGVIIPCIIIFSLSYGSHYF. Over 30–40 the chain is Lumenal; the sequence is ILRHHLTMKQQ. Residues 41-61 form a helical membrane-spanning segment; sequence LIYEFYVTMIWISYLLAIYTN. The Cytoplasmic portion of the chain corresponds to 62–161; sequence PGRVPKNYKP…GNNNLPHFMR (100 aa). The 51-residue stretch at 114 to 164 folds into the DHHC domain; it reads RYCKKCNNYKPPRSHHCKICQQCVLQMDHHCPWTLNCVGNNNLPHFMRFLG. C144 (S-palmitoyl cysteine intermediate) is an active-site residue. Residues 162 to 182 form a helical membrane-spanning segment; that stretch reads FLGWIIWGTGYLMIQLIKLII. At 183–201 the chain is on the lumenal side; that stretch reads NYYENSNMPHYLFNKTELV. A helical transmembrane segment spans residues 202 to 222; the sequence is AIIAITPLNFFVFASILVLFI. Topologically, residues 223–446 are cytoplasmic; it reads RCLINICKGM…TDFGVDEDSD (224 aa).

The protein belongs to the DHHC palmitoyltransferase family. PFA4 subfamily.

The protein resides in the endoplasmic reticulum membrane. It carries out the reaction L-cysteinyl-[protein] + hexadecanoyl-CoA = S-hexadecanoyl-L-cysteinyl-[protein] + CoA. Mediates the reversible addition of palmitate to target proteins, thereby regulating their membrane association and biological function. This is Palmitoyltransferase PFA4 from Candida albicans (strain SC5314 / ATCC MYA-2876) (Yeast).